Here is an 88-residue protein sequence, read N- to C-terminus: Small ribosomal subunit protein bS20 (88 aa).

This sequence belongs to the bacterial ribosomal protein bS20 family.

In terms of biological role, binds directly to 16S ribosomal RNA. The protein is Small ribosomal subunit protein bS20 of Maricaulis maris (strain MCS10) (Caulobacter maris).